The primary structure comprises 388 residues: Xylose isomerase (388 aa).

Residues histidine 54 and aspartate 57 contribute to the active site. Mg(2+) is bound by residues glutamate 181, glutamate 217, histidine 220, aspartate 245, aspartate 255, aspartate 257, and aspartate 287.

It belongs to the xylose isomerase family. Homotetramer. Mg(2+) serves as cofactor.

It localises to the cytoplasm. It carries out the reaction alpha-D-xylose = alpha-D-xylulofuranose. This Streptomyces olivaceoviridis (Streptomyces corchorusii) protein is Xylose isomerase.